The sequence spans 508 residues: Photosystem II CP47 reaction center protein (508 aa).

Transmembrane regions (helical) follow at residues 21 to 36 (SVHL…WAGS), 101 to 115 (IVLS…IWHW), 140 to 156 (GIHL…FGAF), 203 to 218 (IAAG…FHLS), 237 to 252 (VLSS…AFVV), and 457 to 472 (TFAL…HGAR).

It belongs to the PsbB/PsbC family. PsbB subfamily. As to quaternary structure, PSII is composed of 1 copy each of membrane proteins PsbA, PsbB, PsbC, PsbD, PsbE, PsbF, PsbH, PsbI, PsbJ, PsbK, PsbL, PsbM, PsbT, PsbX, PsbY, PsbZ, Psb30/Ycf12, at least 3 peripheral proteins of the oxygen-evolving complex and a large number of cofactors. It forms dimeric complexes. It depends on Binds multiple chlorophylls. PSII binds additional chlorophylls, carotenoids and specific lipids. as a cofactor.

The protein localises to the plastid. It localises to the chloroplast thylakoid membrane. Its function is as follows. One of the components of the core complex of photosystem II (PSII). It binds chlorophyll and helps catalyze the primary light-induced photochemical processes of PSII. PSII is a light-driven water:plastoquinone oxidoreductase, using light energy to abstract electrons from H(2)O, generating O(2) and a proton gradient subsequently used for ATP formation. This is Photosystem II CP47 reaction center protein from Angiopteris evecta (Mule's foot fern).